The chain runs to 420 residues: Dachshund homolog dac-1 (420 aa).

The segment at 23–77 (PSSSSSSSNNSSSNTSSSNFLSPYEYQESSTSPRDTTDSSGESSLSSSGSSSSLN) is disordered. Composition is skewed to low complexity over residues 24 to 41 (SSSS…SSSN) and 51 to 77 (SSTS…SSLN). The segment at 85 to 171 (KLIKFRGHNV…LLKTSDFEKL (87 aa)) is DACHbox-N. The span at 242-258 (NSFERADDDDQNQRDAD) shows a compositional bias: basic and acidic residues. A disordered region spans residues 242–321 (NSFERADDDD…SSSSSGKNDE (80 aa)). The span at 263–273 (LNLSKSGGNSE) shows a compositional bias: polar residues. Positions 297-317 (GGSNSNSLSMSMEAGSSSSSG) are enriched in low complexity.

The protein belongs to the DACH/dachshund family. In terms of tissue distribution, expressed in AFD, AWC, ASE and ASK neurons. Expressed in the alae.

Its subcellular location is the nucleus. In terms of biological role, transcription factor. Plays a role in the thermotactic response. This Caenorhabditis elegans protein is Dachshund homolog dac-1.